Reading from the N-terminus, the 159-residue chain is Protein-export protein SecB (159 aa).

This sequence belongs to the SecB family. As to quaternary structure, homotetramer, a dimer of dimers. One homotetramer interacts with 1 SecA dimer.

Its subcellular location is the cytoplasm. In terms of biological role, one of the proteins required for the normal export of preproteins out of the cell cytoplasm. It is a molecular chaperone that binds to a subset of precursor proteins, maintaining them in a translocation-competent state. It also specifically binds to its receptor SecA. The polypeptide is Protein-export protein SecB (Burkholderia vietnamiensis (strain G4 / LMG 22486) (Burkholderia cepacia (strain R1808))).